The chain runs to 176 residues: Prepronociceptin (176 aa).

Residues 1-19 form the signal peptide; the sequence is MKILFCDLLLLSLFSSVSS. 2 propeptides span residues 20–95 and 169–176; these read SCQK…MQHL and TLHQNGNA.

This sequence belongs to the opioid neuropeptide precursor family. In terms of processing, specific enzymatic cleavages at paired basic residues probably yield other active peptides besides nociceptin. The N-terminal domain contains 6 conserved cysteines thought to be involved in disulfide bonding and/or processing.

Its subcellular location is the secreted. Ligand of the opioid receptor-like receptor OPRL1. It may act as a transmitter in the brain by modulating nociceptive and locomotor behavior. May be involved in neuronal differentiation and development. In terms of biological role, blocks nociceptin action in pain transmission by inhibiting nociceptin-induced hyperalgesia and allodynia. Functionally, has potent analgesic activity. This is Prepronociceptin (PNOC) from Bos taurus (Bovine).